The sequence spans 57 residues: Large ribosomal subunit protein bL32 (57 aa).

It belongs to the bacterial ribosomal protein bL32 family.

The polypeptide is Large ribosomal subunit protein bL32 (Bacillus anthracis (strain A0248)).